Reading from the N-terminus, the 657-residue chain is Methylenetetrahydrofolate reductase 1 (657 aa).

The Proton donor/acceptor role is filled by Glu-18. NAD(+)-binding positions include 18–23 (EFFPPK) and 49–50 (TW). Residues 49–50 (TW), His-78, and 108–110 (RGD) each bind FAD. Asp-110 serves as a coordination point for substrate. Position 120 is a phosphoserine (Ser-120). FAD-binding positions include 129–130 (YA), Tyr-152, Asp-171, and Lys-178. Positions 189 and 286 each coordinate substrate. Ser-301 carries the post-translational modification Phosphoserine. Positions 308–329 (VNESSEEEGEDETSGEIGSIEN) are disordered. Acidic residues predominate over residues 311–321 (SSEEEGEDETS). A Phosphoserine modification is found at Ser-358.

Belongs to the methylenetetrahydrofolate reductase family. The cofactor is FAD.

The enzyme catalyses (6S)-5-methyl-5,6,7,8-tetrahydrofolate + NADP(+) = (6R)-5,10-methylene-5,6,7,8-tetrahydrofolate + NADPH + H(+). The catalysed reaction is (6S)-5-methyl-5,6,7,8-tetrahydrofolate + NAD(+) = (6R)-5,10-methylene-5,6,7,8-tetrahydrofolate + NADH + H(+). It functions in the pathway one-carbon metabolism; tetrahydrofolate interconversion. In Saccharomyces cerevisiae (strain ATCC 204508 / S288c) (Baker's yeast), this protein is Methylenetetrahydrofolate reductase 1 (MET12).